The sequence spans 122 residues: Large ribosomal subunit protein uL14 (122 aa).

The protein belongs to the universal ribosomal protein uL14 family. In terms of assembly, part of the 50S ribosomal subunit. Forms a cluster with proteins L3 and L19. In the 70S ribosome, L14 and L19 interact and together make contacts with the 16S rRNA in bridges B5 and B8.

In terms of biological role, binds to 23S rRNA. Forms part of two intersubunit bridges in the 70S ribosome. The sequence is that of Large ribosomal subunit protein uL14 from Mesorhizobium japonicum (strain LMG 29417 / CECT 9101 / MAFF 303099) (Mesorhizobium loti (strain MAFF 303099)).